A 343-amino-acid polypeptide reads, in one-letter code: Fanconi anemia group F protein (343 aa).

As to quaternary structure, belongs to the multisubunit FA complex composed of FANCA, FANCB, FANCC, FANCE, FANCF, FANCG, FANCL/PHF9 and FANCM. In complex with FANCA, FANCG and FANCL, but not with FANCC, nor FANCE, interacts with HES1; this interaction may be essential for the stability and nuclear localization of FA core complex proteins.

It localises to the nucleus. DNA repair protein that may operate in a postreplication repair or a cell cycle checkpoint function. May be implicated in interstrand DNA cross-link repair and in the maintenance of normal chromosome stability. This is Fanconi anemia group F protein from Mus musculus (Mouse).